Consider the following 257-residue polypeptide: Pantothenate synthetase (257 aa).

29 to 36 (MGNLHAGH) is a binding site for ATP. The Proton donor role is filled by H36. Residue Q60 participates in (R)-pantoate binding. Q60 contributes to the beta-alanine binding site. 145–148 (GEKD) serves as a coordination point for ATP. Q151 is a binding site for (R)-pantoate. Residues V174 and 182-185 (LSSR) contribute to the ATP site.

Belongs to the pantothenate synthetase family. Homodimer.

The protein localises to the cytoplasm. It catalyses the reaction (R)-pantoate + beta-alanine + ATP = (R)-pantothenate + AMP + diphosphate + H(+). The protein operates within cofactor biosynthesis; (R)-pantothenate biosynthesis; (R)-pantothenate from (R)-pantoate and beta-alanine: step 1/1. In terms of biological role, catalyzes the condensation of pantoate with beta-alanine in an ATP-dependent reaction via a pantoyl-adenylate intermediate. The sequence is that of Pantothenate synthetase from Coxiella burnetii (strain Dugway 5J108-111).